Here is a 554-residue protein sequence, read N- to C-terminus: Inactive sesquithujene synthase (554 aa).

Mg(2+) contacts are provided by Asp-308 and Asp-312. Residues Asp-308, Asp-312, Arg-449, and Asn-452 each contribute to the substrate site. The short motif at 308–312 (DDMFD) is the DDXXD motif element. Residues Asn-452, Ser-456, and Glu-460 each contribute to the Mg(2+) site.

The protein belongs to the terpene synthase family. In terms of assembly, monomer. Mg(2+) is required as a cofactor. Mn(2+) serves as cofactor.

It is found in the cytoplasm. It participates in secondary metabolite biosynthesis; terpenoid biosynthesis. Its function is as follows. Non-functional sesquiterpene synthase having less than 1% of the activity found in cv. Delprim. In Zea mays (Maize), this protein is Inactive sesquithujene synthase.